Consider the following 322-residue polypeptide: Arginase-1 (322 aa).

N6-succinyllysine is present on lysine 17. 2 positions are modified to phosphoserine: serine 62 and serine 72. Lysine 75 is subject to N6-succinyllysine. Mn(2+)-binding residues include histidine 101, aspartate 124, histidine 126, and aspartate 128. Substrate contacts are provided by residues 126-130 (HTDIN) and 137-139 (SGN). Position 163 is a phosphoserine (serine 163). Aspartate 183 provides a ligand contact to substrate. A Phosphoserine modification is found at serine 217. Residues aspartate 232 and aspartate 234 each contribute to the Mn(2+) site. 2 residues coordinate substrate: threonine 246 and glutamate 277.

The protein belongs to the arginase family. Homotrimer. Interacts with CMTM6. Mn(2+) serves as cofactor. As to expression, within the immune system initially reported to be selectively expressed in granulocytes (polymorphonuclear leukocytes [PMNs]). Also detected in macrophages mycobacterial granulomas. Expressed in group2 innate lymphoid cells (ILC2s) during lung disease.

The protein localises to the cytoplasm. Its subcellular location is the cytoplasmic granule. It catalyses the reaction L-arginine + H2O = urea + L-ornithine. It participates in nitrogen metabolism; urea cycle; L-ornithine and urea from L-arginine: step 1/1. Key element of the urea cycle converting L-arginine to urea and L-ornithine, which is further metabolized into metabolites proline and polyamides that drive collagen synthesis and bioenergetic pathways critical for cell proliferation, respectively; the urea cycle takes place primarily in the liver and, to a lesser extent, in the kidneys. Functionally, functions in L-arginine homeostasis in nonhepatic tissues characterized by the competition between nitric oxide synthase (NOS) and arginase for the available intracellular substrate arginine. Arginine metabolism is a critical regulator of innate and adaptive immune responses. Involved in an antimicrobial effector pathway in polymorphonuclear granulocytes (PMN). Upon PMN cell death is liberated from the phagolysosome and depletes arginine in the microenvironment leading to suppressed T cell and natural killer (NK) cell proliferation and cytokine secretion. In group 2 innate lymphoid cells (ILC2s) promotes acute type 2 inflammation in the lung and is involved in optimal ILC2 proliferation but not survival. In humans, the immunological role in the monocytic/macrophage/dendritic cell (DC) lineage is unsure. The sequence is that of Arginase-1 (ARG1) from Homo sapiens (Human).